A 531-amino-acid polypeptide reads, in one-letter code: MGVKTILYQEDARKALERGMDILAEAVSVTLGPKGRNVVLEKKFGTPQIVNDGVTIAKEINLQDTLENTGVSLIRQAASKTNDVAGDGTTTATVLAYAIIKQGMRNVAAGANPIVLKRGIEKATQFVVRKIMDYARPIENLTDITQVAQISAGNDAEVGSLIANAIDKVGREGLISLEESKSTATELEITEGMGFDRGFISGYFVTNTERMEVVLDNPYILLTDKKITVVKQDLVPTLELVSKTNQPLLIISDNVEKEALATLIVNKLRGILNVVAVRAPGFGDRRKAILQDLAVLTGGDVITADAGLSLERMDIENLGVARRVVVGKENTTIISDSNKQEVLARCEQLRRQMETSDSTYEKEKLQERLAKLTGGVAVIKVGAATETEMKDRKLRLEDAVNATKAAVEEGIVPGGGTTLIHIAAELLEWVKETLTGDELLGGLIVEKALQAPLKKIALNAGENGSIIVERIKESDFEIGYNAATNEIVDMYEAGIIDPAKVTRSTLQNAASIASMILTTECIIVDKNKETK.

ATP-binding positions include 30 to 33 (TLGP), 87 to 91 (DGTTT), glycine 415, 481 to 483 (NAA), and aspartate 497.

The protein belongs to the chaperonin (HSP60) family. As to quaternary structure, forms a cylinder of 14 subunits composed of two heptameric rings stacked back-to-back. Interacts with the co-chaperonin GroES.

Its subcellular location is the plastid. It is found in the chloroplast. The catalysed reaction is ATP + H2O + a folded polypeptide = ADP + phosphate + an unfolded polypeptide.. Its function is as follows. Together with its co-chaperonin GroES, plays an essential role in assisting protein folding. The GroEL-GroES system forms a nano-cage that allows encapsulation of the non-native substrate proteins and provides a physical environment optimized to promote and accelerate protein folding. The protein is Chaperonin GroEL, chloroplastic of Emiliania huxleyi (Coccolithophore).